Reading from the N-terminus, the 70-residue chain is MCNRNVITIPYEEDMSKYSILHQVGGRIEYFQKEYSQYPMFAFDSEEDYNEYKCLIMQLKKNKKVSSFSF.

This Bacillus subtilis (strain 168) protein is SPbeta prophage-derived uncharacterized protein YotJ (yotJ).